Here is a 368-residue protein sequence, read N- to C-terminus: Peptide chain release factor 2 (368 aa).

The residue at position 251 (Q251) is an N5-methylglutamine.

Belongs to the prokaryotic/mitochondrial release factor family. In terms of processing, methylated by PrmC. Methylation increases the termination efficiency of RF2.

Its subcellular location is the cytoplasm. In terms of biological role, peptide chain release factor 2 directs the termination of translation in response to the peptide chain termination codons UGA and UAA. The sequence is that of Peptide chain release factor 2 from Nitratiruptor sp. (strain SB155-2).